The following is a 292-amino-acid chain: tRNA (adenine(9)-N1)-methyltransferase (292 aa).

In terms of domain architecture, SAM-dependent MTase TRM10-type spans 72–253 (TFRKGGKKVS…ISLQSKSDKI (182 aa)).

It belongs to the class IV-like SAM-binding methyltransferase superfamily. TRM10 family.

It is found in the cytoplasm. The enzyme catalyses adenosine(9) in tRNA + S-adenosyl-L-methionine = N(1)-methyladenosine(9) in tRNA + S-adenosyl-L-homocysteine + H(+). Functionally, catalyzes the S-adenosyl-L-methionine-dependent formation of N(1)-methyladenine at position 9 (m1A9) in tRNA. This chain is tRNA (adenine(9)-N1)-methyltransferase, found in Sulfolobus acidocaldarius (strain ATCC 33909 / DSM 639 / JCM 8929 / NBRC 15157 / NCIMB 11770).